An 89-amino-acid chain; its full sequence is Small ribosomal subunit protein uS15 (89 aa).

The protein belongs to the universal ribosomal protein uS15 family. As to quaternary structure, part of the 30S ribosomal subunit. Forms a bridge to the 50S subunit in the 70S ribosome, contacting the 23S rRNA.

Functionally, one of the primary rRNA binding proteins, it binds directly to 16S rRNA where it helps nucleate assembly of the platform of the 30S subunit by binding and bridging several RNA helices of the 16S rRNA. In terms of biological role, forms an intersubunit bridge (bridge B4) with the 23S rRNA of the 50S subunit in the ribosome. The sequence is that of Small ribosomal subunit protein uS15 from Orientia tsutsugamushi (strain Boryong) (Rickettsia tsutsugamushi).